Consider the following 306-residue polypeptide: MSTIIKTTDLTKMYGSQKSVDHLNINVKQGDIYGFLGRNGAGKTTTIRMLLGLIKPTSGQIEIFGENFFKNKKEILRRIGSIVEVPGFYANLTARENLLINAKIIGIHKKNAIDEVLEIVGLQHETKKLVGKFSLGMKQRLGIARALLHYPELLILDEPTNGLDPIGIKEMRRLIHSLAKERNITIFISSHILSEIEQLVDHVGIIHEGKLLEEIPFDHLKKRNRKYLEFQLSDQNKAVVLMEQHFDIHDYEVHQDGIIRVYSHLGQQGKLNKLFVENGIDVLKITMSEDSLEDYFVKLIGGGTIG.

Residues 5–233 enclose the ABC transporter domain; that stretch reads IKTTDLTKMY…NRKYLEFQLS (229 aa). Position 37–44 (37–44) interacts with ATP; that stretch reads GRNGAGKT.

The protein belongs to the ABC transporter superfamily.

In terms of biological role, part of the binding-protein-dependent transport system for bacitracin that confer resistance to this antibiotic. Probably responsible for energy coupling to the transport system. The chain is Bacitracin transport ATP-binding protein BcrA (bcrA) from Bacillus licheniformis.